Reading from the N-terminus, the 122-residue chain is Glucagon-2 (122 aa).

The first 21 residues, 1 to 21 (MTSLHSLAGLLLLMIIQSSWQ), serve as a signal peptide directing secretion. 2 consecutive propeptides follow at residues 83–86 (NGLF) and glutamate 122.

It belongs to the glucagon family.

The protein localises to the secreted. Functionally, promotes hydrolysis of glycogen and lipids, and raises the blood sugar level. The polypeptide is Glucagon-2 (gcg2) (Lophius americanus (American angler)).